Here is a 741-residue protein sequence, read N- to C-terminus: uncharacterized protein (741 aa).

5 helical membrane passes run 34 to 54 (WLLWVTAGLVLFLLALVLLII), 76 to 96 (LIIPFIALFATIITFQVFING), 120 to 140 (LAVLFIWITGTAFLSGLFVSL), 156 to 176 (LSVFFGVLLLSLLFSCVLIII), and 187 to 207 (LLLLLGVSLASFTTVILAFSI). Residues 404 to 423 (EAEEKERQEKEEKEKAEKDN) are compositionally biased toward basic and acidic residues. Disordered regions lie at residues 404-473 (EAEE…FRPR) and 555-647 (QKEL…ENAK). Over residues 424 to 439 (GNGQDSNKVNSVSTEP) the composition is skewed to polar residues. Basic and acidic residues-rich tracts occupy residues 445-465 (SDADSKDNNDSSDSQGKDSSK) and 555-573 (QKELTEKNKQKQDGKDQKS). Residues 623-643 (DNTDESEDKQSEEEEKFDEEI) show a composition bias toward acidic residues. Helical transmembrane passes span 655–675 (AFFNTASIWLSSPFLFFENGA) and 715–735 (VIIAMVLVVTLGLLVGSFFAY).

To M.pneumoniae MPN_333.

The protein resides in the cell membrane. This is an uncharacterized protein from Mycoplasma pneumoniae (strain ATCC 29342 / M129 / Subtype 1) (Mycoplasmoides pneumoniae).